Consider the following 231-residue polypeptide: 7-cyano-7-deazaguanine synthase (231 aa).

An ATP-binding site is contributed by 11–21 (LSAGLDSTVNA). Residues Cys197, Cys205, Cys208, and Cys211 each contribute to the Zn(2+) site.

This sequence belongs to the QueC family. It depends on Zn(2+) as a cofactor.

The enzyme catalyses 7-carboxy-7-deazaguanine + NH4(+) + ATP = 7-cyano-7-deazaguanine + ADP + phosphate + H2O + H(+). Its pathway is purine metabolism; 7-cyano-7-deazaguanine biosynthesis. Its function is as follows. Catalyzes the ATP-dependent conversion of 7-carboxy-7-deazaguanine (CDG) to 7-cyano-7-deazaguanine (preQ(0)). The sequence is that of 7-cyano-7-deazaguanine synthase from Bdellovibrio bacteriovorus (strain ATCC 15356 / DSM 50701 / NCIMB 9529 / HD100).